The primary structure comprises 120 residues: Myohemerythrin (120 aa).

Positions 26, 56, 60, 75, 79, 108, and 113 each coordinate Fe cation.

This sequence belongs to the hemerythrin family. Monomer.

The protein localises to the cytoplasm. In terms of biological role, myohemerythrin is an oxygen-binding protein found in the retractor muscles of certain worms. The oxygen-binding site contains two iron atoms. This chain is Myohemerythrin, found in Theromyzon tessulatum (Duck leech).